Here is a 460-residue protein sequence, read N- to C-terminus: ATP synthase subunit beta 1 (460 aa).

Gly149–Thr156 contributes to the ATP binding site.

This sequence belongs to the ATPase alpha/beta chains family. F-type ATPases have 2 components, CF(1) - the catalytic core - and CF(0) - the membrane proton channel. CF(1) has five subunits: alpha(3), beta(3), gamma(1), delta(1), epsilon(1). CF(0) has three main subunits: a(1), b(2) and c(9-12). The alpha and beta chains form an alternating ring which encloses part of the gamma chain. CF(1) is attached to CF(0) by a central stalk formed by the gamma and epsilon chains, while a peripheral stalk is formed by the delta and b chains.

It localises to the cell inner membrane. The catalysed reaction is ATP + H2O + 4 H(+)(in) = ADP + phosphate + 5 H(+)(out). In terms of biological role, produces ATP from ADP in the presence of a proton gradient across the membrane. The catalytic sites are hosted primarily by the beta subunits. The polypeptide is ATP synthase subunit beta 1 (Nitrosomonas eutropha (strain DSM 101675 / C91 / Nm57)).